A 253-amino-acid chain; its full sequence is Sporulation initiation inhibitor protein Soj (253 aa).

Residues Lys-11, Gly-12, Gly-13, Val-14, Gly-15, Lys-16, Thr-17, Thr-18, Pro-214, and Asn-216 each contribute to the ATP site. Thr-17 is a binding site for Mg(2+).

It belongs to the ParA family. In terms of assembly, dimerizes in the presence of ATP but not ADP; ATP-binding is required for double-stranded (ds)DNA-binding. Interacts with DnaA.

It localises to the cytoplasm. The enzyme catalyses ATP + H2O = ADP + phosphate + H(+). In terms of biological role, acts as a spatially regulated molecular switch, capable of either inhibiting or activating the ability of DnaA to initiate DNA replication. Monomeric ADP-Soj inhibits oligomerization of DnaA on single-stranded (ss)- or double-stranded (ds)DNA, thus inhibiting DNA replication initiation; does not disassemble premade DnaA-DNA filaments. Decreases the residence time of DnaA on the chromosome at its binding sites (oriC, replication forks and (probably) promoter-binding sites). Soj forms nucleoprotein filaments in an ATP- and DNA-dependent manner. Inhibits the initiation of sporulation, Spo0J antagonizes this inhibition. Soj ultimately inhibits the activation (phosphorylation) of Spo0A. This chain is Sporulation initiation inhibitor protein Soj, found in Bacillus subtilis (strain 168).